The chain runs to 295 residues: Protoheme IX farnesyltransferase (295 aa).

Over 1 to 9 (MSVKHFIQI) the chain is Cytoplasmic. The helical transmembrane segment at 10–28 (TKPGIIFGNVLSVAGGFFL) threads the bilayer. Residues 29–37 (ASKGHVDFA) are Periplasmic-facing. A helical transmembrane segment spans residues 38 to 56 (LFLAVVIGTSLVVASGCVF). The Cytoplasmic segment spans residues 57–78 (NNCIDRDIDHKMERTKNRVMVQ). A helical transmembrane segment spans residues 79–97 (GGMSLPLALIYATLLGVAG). The Periplasmic segment spans residues 98–107 (FSLLYVQANP). A helical membrane pass occupies residues 108-126 (LSAFCALIGFIVYVGFYSL). At 127–197 (WLKRKSVHGT…YSAANIPVLP (71 aa)) the chain is on the cytoplasmic side. The helical transmembrane segment at 198-216 (VARGILAAKKQIVLYVLAF) threads the bilayer. At 217–228 (VLATLMLTLGGY) the chain is on the periplasmic side. The chain crosses the membrane as a helical span at residues 229 to 247 (AGLGYLAVAAAMGLYWLYM). Topologically, residues 248–268 (AWGGYKAEDDSKWARKVFGFS) are cytoplasmic. Residues 269 to 287 (ILTVTALSVMMGVDSQTAA) form a helical membrane-spanning segment. Over 288-295 (DVLMTYAR) the chain is Periplasmic.

It belongs to the UbiA prenyltransferase family. Mg(2+) serves as cofactor. Ca(2+) is required as a cofactor.

Its subcellular location is the cell inner membrane. It catalyses the reaction heme b + (2E,6E)-farnesyl diphosphate + H2O = Fe(II)-heme o + diphosphate. Functionally, converts protoheme IX and farnesyl diphosphate to heme O. The polypeptide is Protoheme IX farnesyltransferase (cyoE) (Pseudomonas putida (Arthrobacter siderocapsulatus)).